The following is a 488-amino-acid chain: DNA polymerase II small subunit (488 aa).

It belongs to the DNA polymerase delta/II small subunit family. Heterodimer of a large subunit and a small subunit.

The enzyme catalyses DNA(n) + a 2'-deoxyribonucleoside 5'-triphosphate = DNA(n+1) + diphosphate. It carries out the reaction Exonucleolytic cleavage in the 3'- to 5'-direction to yield nucleoside 5'-phosphates.. Functionally, possesses two activities: a DNA synthesis (polymerase) and an exonucleolytic activity that degrades single-stranded DNA in the 3' to 5' direction. Has a template-primer preference which is characteristic of a replicative DNA polymerase. In Archaeoglobus fulgidus (strain ATCC 49558 / DSM 4304 / JCM 9628 / NBRC 100126 / VC-16), this protein is DNA polymerase II small subunit (polB).